A 188-amino-acid polypeptide reads, in one-letter code: dCTP deaminase (188 aa).

Residues 111 to 116 (KSTYAR), 135 to 137 (TLE), Gln156, Tyr170, and Gln180 contribute to the dCTP site. Glu137 serves as the catalytic Proton donor/acceptor.

The protein belongs to the dCTP deaminase family. Homotrimer.

The catalysed reaction is dCTP + H2O + H(+) = dUTP + NH4(+). It functions in the pathway pyrimidine metabolism; dUMP biosynthesis; dUMP from dCTP (dUTP route): step 1/2. Functionally, catalyzes the deamination of dCTP to dUTP. The chain is dCTP deaminase from Nitrosococcus oceani (strain ATCC 19707 / BCRC 17464 / JCM 30415 / NCIMB 11848 / C-107).